Here is a 141-residue protein sequence, read N- to C-terminus: ATP synthase epsilon chain (141 aa).

The protein belongs to the ATPase epsilon chain family. In terms of assembly, F-type ATPases have 2 components, CF(1) - the catalytic core - and CF(0) - the membrane proton channel. CF(1) has five subunits: alpha(3), beta(3), gamma(1), delta(1), epsilon(1). CF(0) has three main subunits: a, b and c.

It is found in the cell inner membrane. Produces ATP from ADP in the presence of a proton gradient across the membrane. The protein is ATP synthase epsilon chain of Gluconacetobacter diazotrophicus (strain ATCC 49037 / DSM 5601 / CCUG 37298 / CIP 103539 / LMG 7603 / PAl5).